A 358-amino-acid polypeptide reads, in one-letter code: GTPase Obg (358 aa).

The Obg domain maps to 1-159 (MKFVDEVTIR…RNLHLELRLL (159 aa)). One can recognise an OBG-type G domain in the interval 160 to 334 (ADVGLLGMPN…LAQDVMNRLE (175 aa)). GTP-binding positions include 166–173 (GMPNAGKS), 191–195 (FTTLY), 213–216 (DIPG), 284–287 (NKLD), and 315–317 (SAL). The Mg(2+) site is built by Ser173 and Thr193. The interval 337 to 358 (DEEAREAGERARREQRQEEGPE) is disordered. A compositionally biased stretch (basic and acidic residues) spans 341-358 (REAGERARREQRQEEGPE).

The protein belongs to the TRAFAC class OBG-HflX-like GTPase superfamily. OBG GTPase family. As to quaternary structure, monomer. Mg(2+) is required as a cofactor.

The protein resides in the cytoplasm. Its function is as follows. An essential GTPase which binds GTP, GDP and possibly (p)ppGpp with moderate affinity, with high nucleotide exchange rates and a fairly low GTP hydrolysis rate. Plays a role in control of the cell cycle, stress response, ribosome biogenesis and in those bacteria that undergo differentiation, in morphogenesis control. The sequence is that of GTPase Obg from Alkalilimnicola ehrlichii (strain ATCC BAA-1101 / DSM 17681 / MLHE-1).